The primary structure comprises 381 residues: Probable 26S proteasome regulatory subunit rpn9 (381 aa).

Positions 177–343 (QYYRHCLLYL…QIVTISSVQS (167 aa)) constitute a PCI domain.

It belongs to the proteasome subunit S11 family.

Functionally, acts as a regulatory subunit of the 26S proteasome which is involved in the ATP-dependent degradation of ubiquitinated proteins. The chain is Probable 26S proteasome regulatory subunit rpn9 (rpn9) from Schizosaccharomyces pombe (strain 972 / ATCC 24843) (Fission yeast).